A 533-amino-acid polypeptide reads, in one-letter code: T-complex protein 1 subunit delta (533 aa).

The tract at residues 1–24 is disordered; sequence MVVKPAARGMKPQGQAYKDKSKPA.

This sequence belongs to the TCP-1 chaperonin family. In terms of assembly, heterooligomeric complex of about 850 to 900 kDa that forms two stacked rings, 12 to 16 nm in diameter.

The protein localises to the cytoplasm. Molecular chaperone; assists the folding of proteins upon ATP hydrolysis. Known to play a role, in vitro, in the folding of actin and tubulin. The protein is T-complex protein 1 subunit delta of Ochlerotatus triseriatus (Eastern treehole mosquito).